Consider the following 211-residue polypeptide: Porin MspA (211 aa).

A signal peptide spans 1–27 (MKAISRVLIAMVAAIAALFTSTGTSHA).

It belongs to the mycobacterial porin (TC 1.B.24) family. As to quaternary structure, forms very stable octamers. Isolated as a 100 kDa complex that can be reduced to monomers upon boiling in 80% dimethyl sulfoxide for 15 minutes. Structures show a goblet with the wide end on the exterior of the outer membrane and a central channel. It is not known if mixed oligomers of MspA with other Msp subunits form in vivo.

It localises to the cell outer membrane. The protein localises to the secreted. The protein resides in the cell wall. Its function is as follows. The major porin in this organism, forms a water-filled channel which favors the permeation of cations, amino acids, iron Fe(3+) and less efficiently phosphate. Does not transport Fe-ExoMS, the predominant siderophore. Plays a role in transport of beta-lactamase and hydrophilic fluoroquinolone antibiotics such as norfloxacin as well as chloramphenicol. There are about 2400 porins in wild-type, 800 in an mspA deletion and 150 in a double mspA-mspC deletion. Different conductance values with maxima at 2.3 and 4.6 nanosiemens might be caused by a simultaneous reconstitution of MspA channels into the membrane or by the existence of different MspA conformations. This chain is Porin MspA (mspA), found in Mycolicibacterium smegmatis (strain ATCC 700084 / mc(2)155) (Mycobacterium smegmatis).